The sequence spans 198 residues: uncharacterized protein (198 aa).

This sequence to A.aeolicus aq_1211 and aq_1583.

This is an uncharacterized protein from Aquifex aeolicus (strain VF5).